A 34-amino-acid chain; its full sequence is NLIQFSNMIQLDRCCETHDNEAEKKGCYPKLTLY.

His18 is an active-site residue. Asp19 serves as a coordination point for Ca(2+).

The protein belongs to the phospholipase A2 family. Group I subfamily. D49 sub-subfamily. It depends on Ca(2+) as a cofactor. In terms of processing, contains 7 disulfide bonds. In terms of tissue distribution, expressed by the venom gland.

It is found in the secreted. The catalysed reaction is a 1,2-diacyl-sn-glycero-3-phosphocholine + H2O = a 1-acyl-sn-glycero-3-phosphocholine + a fatty acid + H(+). Its function is as follows. Snake venom phospholipase A2 (PLA2) that strongly inhibits platelet aggregation and has a strong anticoagulant activity. PLA2 catalyzes the calcium-dependent hydrolysis of the 2-acyl groups in 3-sn-phosphoglycerides. The chain is Phospholipase A2 from Pseudechis papuanus (Papuan black snake).